The following is a 218-amino-acid chain: Non-structural protein NS3 (218 aa).

The protein belongs to the orbivirus NS3 family.

In terms of biological role, may play a role in the release of virions from infected cells. The chain is Non-structural protein NS3 (Segment-10) from Camelus dromedarius (Dromedary).